A 615-amino-acid polypeptide reads, in one-letter code: Medium-chain acyl-CoA ligase ACSF2, mitochondrial (615 aa).

The N-terminal 42 residues, 1–42 (MAVYVGMLRVARLCARSPRVLGARVGLSRVWQEARLWGVRPL), are a transit peptide targeting the mitochondrion. The residue at position 179 (lysine 179) is an N6-acetyllysine. Lysine 182 carries the N6-acetyllysine; alternate modification. N6-succinyllysine; alternate is present on lysine 182. Lysine 199 is subject to N6-acetyllysine. An ATP-binding site is contributed by 263 to 271 (TSGTTGSPK). Residues lysine 340 and lysine 398 each carry the N6-acetyllysine modification. N6-succinyllysine is present on lysine 478. ATP-binding residues include aspartate 493 and arginine 508. An N6-acetyllysine modification is found at lysine 510. N6-acetyllysine; alternate occurs at positions 544 and 570. Lysine 544 and lysine 570 each carry N6-succinyllysine; alternate. Position 599 (lysine 599) interacts with ATP. Lysine 599 is subject to N6-succinyllysine.

It belongs to the ATP-dependent AMP-binding enzyme family.

The protein resides in the mitochondrion. The catalysed reaction is a medium-chain fatty acid + ATP + CoA = a medium-chain fatty acyl-CoA + AMP + diphosphate. It carries out the reaction octanoate + ATP + CoA = octanoyl-CoA + AMP + diphosphate. Acyl-CoA synthases catalyze the initial reaction in fatty acid metabolism, by forming a thioester with CoA. Has some preference toward medium-chain substrates. Plays a role in adipocyte differentiation. The chain is Medium-chain acyl-CoA ligase ACSF2, mitochondrial from Bos taurus (Bovine).